A 372-amino-acid polypeptide reads, in one-letter code: Riboflavin biosynthesis protein RibD (372 aa).

A CMP/dCMP-type deaminase domain is found at 1-122 (MKDIFYMKKA…KWLKKHGILV (122 aa)). Residues 1-145 (MKDIFYMKKA…KGFFQRMTTG (145 aa)) form a deaminase region. H50 contacts Zn(2+). Residue E52 is the Proton donor of the active site. Zn(2+) is bound by residues C75 and C84. Positions 146–372 (IPWIKLKLAS…KLILTKHNSS (227 aa)) are reductase. Position 154 (A154) interacts with NADP(+). S168 lines the substrate pocket. W170 lines the NADP(+) pocket. Substrate is bound at residue R184. Residues T196 and D200 each coordinate NADP(+). Substrate is bound by residues L204 and R207. An NADP(+)-binding site is contributed by S236. E301 lines the substrate pocket. NADP(+) is bound at residue 303–309 (GPSLSSS).

This sequence in the N-terminal section; belongs to the cytidine and deoxycytidylate deaminase family. The protein in the C-terminal section; belongs to the HTP reductase family. Zn(2+) is required as a cofactor.

The enzyme catalyses 2,5-diamino-6-hydroxy-4-(5-phosphoribosylamino)-pyrimidine + H2O + H(+) = 5-amino-6-(5-phospho-D-ribosylamino)uracil + NH4(+). It carries out the reaction 5-amino-6-(5-phospho-D-ribitylamino)uracil + NADP(+) = 5-amino-6-(5-phospho-D-ribosylamino)uracil + NADPH + H(+). Its pathway is cofactor biosynthesis; riboflavin biosynthesis; 5-amino-6-(D-ribitylamino)uracil from GTP: step 2/4. The protein operates within cofactor biosynthesis; riboflavin biosynthesis; 5-amino-6-(D-ribitylamino)uracil from GTP: step 3/4. Its function is as follows. Converts 2,5-diamino-6-(ribosylamino)-4(3h)-pyrimidinone 5'-phosphate into 5-amino-6-(ribosylamino)-2,4(1h,3h)-pyrimidinedione 5'-phosphate. This Buchnera aphidicola subsp. Baizongia pistaciae (strain Bp) protein is Riboflavin biosynthesis protein RibD (ribD).